The primary structure comprises 502 residues: ATP synthase subunit alpha (502 aa).

ATP is bound at residue 169-176 (GDRQTGKT).

The protein belongs to the ATPase alpha/beta chains family. As to quaternary structure, F-type ATPases have 2 components, CF(1) - the catalytic core - and CF(0) - the membrane proton channel. CF(1) has five subunits: alpha(3), beta(3), gamma(1), delta(1), epsilon(1). CF(0) has three main subunits: a(1), b(2) and c(9-12). The alpha and beta chains form an alternating ring which encloses part of the gamma chain. CF(1) is attached to CF(0) by a central stalk formed by the gamma and epsilon chains, while a peripheral stalk is formed by the delta and b chains.

Its subcellular location is the cell membrane. It catalyses the reaction ATP + H2O + 4 H(+)(in) = ADP + phosphate + 5 H(+)(out). Its function is as follows. Produces ATP from ADP in the presence of a proton gradient across the membrane. The alpha chain is a regulatory subunit. This Staphylococcus aureus (strain COL) protein is ATP synthase subunit alpha.